Here is a 119-residue protein sequence, read N- to C-terminus: Large ribosomal subunit protein bL20 (119 aa).

This sequence belongs to the bacterial ribosomal protein bL20 family.

Binds directly to 23S ribosomal RNA and is necessary for the in vitro assembly process of the 50S ribosomal subunit. It is not involved in the protein synthesizing functions of that subunit. In Streptococcus mutans serotype c (strain ATCC 700610 / UA159), this protein is Large ribosomal subunit protein bL20.